Reading from the N-terminus, the 236-residue chain is 2-C-methyl-D-erythritol 4-phosphate cytidylyltransferase (236 aa).

Belongs to the IspD/TarI cytidylyltransferase family. IspD subfamily. In terms of assembly, homodimer.

The enzyme catalyses 2-C-methyl-D-erythritol 4-phosphate + CTP + H(+) = 4-CDP-2-C-methyl-D-erythritol + diphosphate. The protein operates within isoprenoid biosynthesis; isopentenyl diphosphate biosynthesis via DXP pathway; isopentenyl diphosphate from 1-deoxy-D-xylulose 5-phosphate: step 2/6. Functionally, catalyzes the formation of 4-diphosphocytidyl-2-C-methyl-D-erythritol from CTP and 2-C-methyl-D-erythritol 4-phosphate (MEP). This chain is 2-C-methyl-D-erythritol 4-phosphate cytidylyltransferase, found in Escherichia coli O157:H7.